The following is a 330-amino-acid chain: Probable UDP-3-O-acylglucosamine N-acyltransferase 1, mitochondrial (330 aa).

The N-terminal 52 residues, 1 to 52 (MANSLRTLFSVSTHGVFLNKRSSYRVRKVFVGMPLRICSEIPRFVSVSCIRS), are a transit peptide targeting the mitochondrion. 160 to 162 (FGF) lines the UDP-N-acetyl-alpha-D-glucosamine pocket. Hexadecanoate-binding residues include D210 and Q214. H217 acts as the Proton acceptor in catalysis. N218, S236, and H254 together coordinate UDP-N-acetyl-alpha-D-glucosamine.

Belongs to the transferase hexapeptide repeat family. LpxD subfamily. Homotrimer.

Its subcellular location is the mitochondrion. The enzyme catalyses a UDP-3-O-[(3R)-3-hydroxyacyl]-alpha-D-glucosamine + a (3R)-hydroxyacyl-[ACP] = a UDP-2-N,3-O-bis[(3R)-3-hydroxyacyl]-alpha-D-glucosamine + holo-[ACP] + H(+). It functions in the pathway glycolipid biosynthesis; lipid IV(A) biosynthesis; lipid IV(A) from (3R)-3-hydroxytetradecanoyl-[acyl-carrier-protein] and UDP-N-acetyl-alpha-D-glucosamine: step 3/6. Its function is as follows. Involved in the biosynthesis of lipid A, a phosphorylated glycolipid that in bacteria anchors the lipopolysaccharide to the outer membrane of the cell. Lipid A-like molecules in plants may serve as structural components of the outer membranes of mitochondria and/or chloroplasts, or may be involved in signal transduction or plant defense responses. This chain is Probable UDP-3-O-acylglucosamine N-acyltransferase 1, mitochondrial (LPXD1), found in Arabidopsis thaliana (Mouse-ear cress).